We begin with the raw amino-acid sequence, 368 residues long: Propane 2-monooxygenase, hydroxylase component small subunit (368 aa).

This sequence belongs to the TmoE/XamoE family. As to quaternary structure, the propane 2-monooxygenase multicomponent enzyme system is composed of an electron transfer component and a monooxygenase component interacting with the effector protein PrmD. The electron transfer component is composed of a reductase (PrmB), and the monooxygenase component is formed by a large subunit (PrmA) and a small subunit (PrmC). Probably requires the presence of the chaperonin-like protein PrmG to ensure a productive folding, resulting of a soluble PrmC, which leads to the active form of PrmABCD.

The catalysed reaction is propane + NADH + O2 + H(+) = propan-2-ol + NAD(+) + H2O. Functionally, component of the propane 2-monooxygenase multicomponent enzyme system which is involved in the degradation of propane via the O2-dependent hydroxylation of propane. Also able to catalyze the oxidation the water contaminant N-nitrosodimethylamine (NDMA). The polypeptide is Propane 2-monooxygenase, hydroxylase component small subunit (Rhodococcus jostii (strain RHA1)).